The following is a 117-amino-acid chain: Transcription elongation factor A protein-like 8 (117 aa).

Positions 1 to 82 are disordered; the sequence is MQKSCDENEG…EEVIRGVDEL (82 aa). The segment covering 41–82 has biased composition (basic and acidic residues); the sequence is NVREETEGSHRGEPAEPSPEPKEDTPARHLNPEEVIRGVDEL. Residues 73 to 100 adopt a coiled-coil conformation; that stretch reads EEVIRGVDELERLREEIRRVRNKFVLMH.

This sequence belongs to the TFS-II family. TFA subfamily.

It localises to the nucleus. Functionally, may be involved in transcriptional regulation. This Mus musculus (Mouse) protein is Transcription elongation factor A protein-like 8 (Tceal8).